Reading from the N-terminus, the 218-residue chain is Glutathione S-transferase Mu 1 (218 aa).

The 87-residue stretch at 2–88 (PMILGYWNVR…YLARKHHLDG (87 aa)) folds into the GST N-terminal domain. Position 7–8 (7–8 (YW)) interacts with glutathione. The residue at position 34 (T34) is a Phosphothreonine. Residues 43-46 (RSQW), K50, and 59-60 (NL) contribute to the glutathione site. Phosphoserine is present on S67. 72 to 73 (QS) provides a ligand contact to glutathione. Residues 90–208 (TEEERIRADI…KSSRYIATPI (119 aa)) enclose the GST C-terminal domain. Y116 is a substrate binding site. Position 210 is a phosphoserine (S210).

Homodimer.

It is found in the cytoplasm. The catalysed reaction is RX + glutathione = an S-substituted glutathione + a halide anion + H(+). It carries out the reaction prostaglandin A2 + glutathione = prostaglandin A2-S-(R)-glutathione. It catalyses the reaction prostaglandin J2 + glutathione = prostaglandin J2-S-(R)-glutathione. The enzyme catalyses prostaglandin J2 + glutathione = prostaglandin J2-S-(S)-glutathione. The catalysed reaction is prostaglandin A2 + glutathione = prostaglandin A2-S-(S)-glutathione. It carries out the reaction 11(S)-hydroxy-14(S),15(S)-epoxy-(5Z,8Z,12E)-eicosatrienoate + glutathione = (11S,15S)-dihydroxy-14(R)-S-glutathionyl-(5Z,8Z,12E)-eicosatrienoate. Its function is as follows. Conjugation of reduced glutathione to a wide number of exogenous and endogenous hydrophobic electrophiles. Involved in the formation of glutathione conjugates of both prostaglandin A2 (PGA2) and prostaglandin J2 (PGJ2). Participates in the formation of novel hepoxilin regioisomers. The sequence is that of Glutathione S-transferase Mu 1 from Mus musculus (Mouse).